The following is a 207-amino-acid chain: Ribosomal RNA small subunit methyltransferase G (207 aa).

S-adenosyl-L-methionine is bound by residues Gly-73, Leu-78, 124–125 (VE), and Arg-139.

This sequence belongs to the methyltransferase superfamily. RNA methyltransferase RsmG family.

Its subcellular location is the cytoplasm. The enzyme catalyses guanosine(527) in 16S rRNA + S-adenosyl-L-methionine = N(7)-methylguanosine(527) in 16S rRNA + S-adenosyl-L-homocysteine. In terms of biological role, specifically methylates the N7 position of guanine in position 527 of 16S rRNA. The chain is Ribosomal RNA small subunit methyltransferase G from Cronobacter sakazakii (strain ATCC BAA-894) (Enterobacter sakazakii).